The following is a 464-amino-acid chain: ATP synthase subunit beta (464 aa).

152-159 contacts ATP; it reads GGAGVGKS.

It belongs to the ATPase alpha/beta chains family. F-type ATPases have 2 components, CF(1) - the catalytic core - and CF(0) - the membrane proton channel. CF(1) has five subunits: alpha(3), beta(3), gamma(1), delta(1), epsilon(1). CF(0) has three main subunits: a(1), b(2) and c(9-12). The alpha and beta chains form an alternating ring which encloses part of the gamma chain. CF(1) is attached to CF(0) by a central stalk formed by the gamma and epsilon chains, while a peripheral stalk is formed by the delta and b chains.

The protein localises to the cell membrane. The catalysed reaction is ATP + H2O + 4 H(+)(in) = ADP + phosphate + 5 H(+)(out). Functionally, produces ATP from ADP in the presence of a proton gradient across the membrane. The catalytic sites are hosted primarily by the beta subunits. This chain is ATP synthase subunit beta, found in Protochlamydia amoebophila (strain UWE25).